A 68-amino-acid polypeptide reads, in one-letter code: Tau-scoloptoxin(04)-Ssm1b (68 aa).

The signal sequence occupies residues 1-25; the sequence is MLKSFCILSVFMVLFLAKFPDLCSG. A propeptide spanning residues 26–36 is cleaved from the precursor; sequence EEISPLKIVVR. 2 cysteine pairs are disulfide-bonded: Cys-45-Cys-56 and Cys-50-Cys-63. A highly charged C-terminal region, binds to TRPV1 channel region spans residues 55–67; that stretch reads RCSIVDKQCIKKE.

Belongs to the scoloptoxin-04 family. Expressed by the venom gland.

The protein resides in the secreted. In terms of biological role, extremely potent agonist and potentiator of TRPV1 (EC(50)=470-521.5 nM (mouse)). It strongly promotes the heat activation process by downshifting the activation threshold temperature. It preferably binds to the activated channel and promotes its opening. Holding the channel closed by cooling prevents binding of this toxin, leaving it ineffective. The toxin binds to the charge-rich outer pore region of the channel where it directly interacts with the pore helix and turret, two adjacent structural elements known to be critical for activation gating of TRPV1. In comparison with Sm1b, induces a TRPV1 desensitization with slower kinetics (20 seconds). In vivo, induces pain in mice after intraplantar injection. Potent agonist and probable potentiator of TRPV1 (EC(50)=38.35 uM (mouse)). Also binds to the outer pore region of TRPV1. In comparison with Sm1a, induces a TRPV1 desensitization with faster kinetics (2 seconds) and leads to a more complete TRPV1 desensitization. Desensitization is achieved by reducing both the open probability and the single-channel conductance upon prolonged exposure. This chain is Tau-scoloptoxin(04)-Ssm1b, found in Scolopendra mutilans (Chinese red-headed centipede).